Consider the following 950-residue polypeptide: Oxysterol-binding protein-related protein 1 (950 aa).

Residues 1–237 (MNTEAEQQLL…NKVIYKALKR (237 aa)) are interaction with RAB7A. ANK repeat units follow at residues 47 to 76 (LGWT…EVNV), 80 to 109 (MGDT…DTTI), and 175 to 204 (LGNT…DPNL). The region spanning 235-334 (LKRYEGPLWK…WLEAIEEHSA (100 aa)) is the PH domain. The stretch at 430–463 (NFKLEQEQEKNKILSEALETLATEHHELEQSLVK) forms a coiled coil. An FFAT motif is present at residues 469–485 (SILSEDEFYDALSDSES). Ser499 bears the Phosphoserine mark. Over residues 501–521 (EEEGEHLGSRKHRMSEEKDCG) the composition is skewed to basic and acidic residues. Disordered stretches follow at residues 501-527 (EEEG…DALS), 795-816 (KKNT…LDEM), and 881-913 (MENG…SEED). Residues 877–913 (DIRAMENGEIDQASEEKKRLEEKQRAARKNRSKSEED) adopt a coiled-coil conformation. A compositionally biased stretch (basic and acidic residues) spans 890–901 (SEEKKRLEEKQR).

The protein belongs to the OSBP family. Interacts (via FFAT motif) with VAPA and VAPB. Interacts with the GTP-bound form of RAB7A. Interacts with OAS1B. Interacts (via FFAT motif) with MOSPD2 (via MSP domain).

Its subcellular location is the late endosome. Functionally, binds phospholipids; exhibits strong binding to phosphatidic acid and weak binding to phosphatidylinositol 3-phosphate. Stabilizes GTP-bound RAB7A on late endosomes/lysosomes and alters functional properties of late endocytic compartments via its interaction with RAB7A. Binds 25-hydroxycholesterol and cholesterol. The sequence is that of Oxysterol-binding protein-related protein 1 from Homo sapiens (Human).